The following is an 86-amino-acid chain: RNA-binding protein Hfq (86 aa).

A Sm domain is found at 9–68 (DPYLNTLRKEKVGVSIYLVNGIKLQGTIESFDQFVILLKNTVSQMVYKHAISTVVPVRPI).

Belongs to the Hfq family. In terms of assembly, homohexamer.

In terms of biological role, RNA chaperone that binds small regulatory RNA (sRNAs) and mRNAs to facilitate mRNA translational regulation in response to envelope stress, environmental stress and changes in metabolite concentrations. Also binds with high specificity to tRNAs. In Pseudomonas fluorescens (strain ATCC BAA-477 / NRRL B-23932 / Pf-5), this protein is RNA-binding protein Hfq.